The chain runs to 256 residues: Hydroxyacylglutathione hydrolase (256 aa).

Positions 58, 60, 62, 63, 116, 135, and 173 each coordinate Zn(2+).

This sequence belongs to the metallo-beta-lactamase superfamily. Glyoxalase II family. As to quaternary structure, monomer. Requires Zn(2+) as cofactor.

It carries out the reaction an S-(2-hydroxyacyl)glutathione + H2O = a 2-hydroxy carboxylate + glutathione + H(+). The protein operates within secondary metabolite metabolism; methylglyoxal degradation; (R)-lactate from methylglyoxal: step 2/2. Its function is as follows. Thiolesterase that catalyzes the hydrolysis of S-D-lactoyl-glutathione to form glutathione and D-lactic acid. In Hyphomonas neptunium (strain ATCC 15444), this protein is Hydroxyacylglutathione hydrolase.